The primary structure comprises 2131 residues: MGSIESDSVLSFFSQQCFQHPDNTAIDDGPNGNLSYSQLDQQSSTLAHCLRQNGIKAGQVVPLLTTSRLEMVIAVLGILKAGGVYVPVDIDQWPADRINYVLGRTCSGLVVYTGDHIPSGINLEEKCRVVQVQIRLENELKAQYEPNPRPRLMCIIFTSGTTDKPKGVMVPHTSVARFVTSPGFNYDIVPGDRVLLVLSVAFDACMGTLFNTICNGGTVILANRLNFQERSRQCTVLVMTPSILDVLSPPQSPSDYPQLERIFLGGETPSQQLLEAWSAFNDVALWIAYGPTEATCAVLCGRLQASSETGQFHPTRLGHSIPGSSVLLLTERMETIQDSNMEGEICIEGPCLTDGYWQDEERTKDRFIEYHGRRVYRTGDLGRFVTTEDNETAIEFCGRRDRVTKIRGFLVNLELDVDAGLRRLDPNITAVFSILLDRKLCTAVVPSSVDCRNLQAAWRLVAPPYLVPDKMVALDGLPLTANGKFDPRQVISILRDALQKDATMQNGTSHNNGAANDRKQYNWRSGPLTIDQTIIKGLQQVLGISQSEINMKDSAVFQGVHSLAAARLSTFCRHHGYNVSVESILTEPSLHALVEKNRHETENRPDSSAFATRTPEESSMPTQGPVTPLQKRMVLDSIVEDPRANCLQHISWYKTEDIGRLREAWKTVVTHEPIFQTTFELDETQEPSQRLIGAGLFIWEETTVTTHAAIKESLKSLPAATGLGSRFRVLHCVGSEFPHNESMFVWAVHHALIDGYSASLVFEKVDKALQNEPFESSHPFMLAAQDIAQMRDKLAPEVDHFWKDQEAQYPGAAGEPLIPEALTNQSGVDFAEHVVNVSIDNQRLRFAAQQAQATPAAIFYAAWALLLSSYTNSDTVIFGAVFSGRNLPFSWAPCMVGPLLNILPLRCRIKRDIESASFVREIHQTIQNISRFQVADRPKDTPPFASTLTVQDSGLRSGTTAIPSLHSPEVRESNLLPLTVVVETDSQITFLYRTDRFSESHVKDMAAIYMSLLDAFLDPGRSLQHCMDRRFPIEMNQAILQTGNIDSEVARVPSVDGGHTLSSLFGTVASLHPTHIAVQKGSHSITYATLVQYAARVAAVIEKKTQPGEVVAILADRSINWIVGIMGATAANTVYCPLDSSYPAEYREDLLRRSHAKLFLVPSKSQLPTADSGVATVSIEDILASDIKPLYPWRKQTPSDGAYICFTSGSTGVPKGVLCLHQGVVSLQSSSEEGRLHSEPGRRIAQFMSTGFDVCVHEVFASLCYGATLVLRKDDDDPFSHLADVDVVSMNATVAGSLDPSEYPDLHYVYLAGEPIPQRTADKWAVGRKLYNAYGPTEATIIVTRTLLQAGILVAIGKPFPSVRAYILNDRRELQPPNTLGNLFVAGVQVSHGYLDLPEATANSYFPDPFLPGSSNERMYDTGDIGFWDTDGKIQCCGRKDRQVKVRGFRINLDGISNMATLRMPTIRHAAAFVKDGAVVLCVEPEDVNTDELRARLKDALPPHAIPRTIYSIAHIPLSLNGKIDVKHLAAMEVRNDTALTNGITKANKLDSAQQTSSNGLSNGASHASSEAHLEKLIIKEWQQLLGLDPSQPLSRSDDFVLLGGDSIRQLNLAARLRSVLGLPIKVKDIIRSSTLGDLITLVAQQQEQHGKKNVPNGTPAHNSVHRPLGYKKLSPPEMEWACKYRHSQSQSTFNVPYVARLSSAVDWQRLASALETVLNRHRVLRSRFTTKDGTGERVLSEHPISVNRTVDDIDIQEVINRPFEFDSSEALIRTVISPSTLVLCISHILCDLTAINTLLYEVAATYRGLALPPVVREYFDVTWHHTVDPEKQRFWAEYLQGLSFKQPDEVKQVNGVNGCDHSNGTKIRKPRSYRGTSRTTSLSDSLYRHLIISSTKNGFTFHQFGMAVAGLVLHFLTGRDDIVLGSPFVNRPSFEDRQVIGLFLEPLPVRISVKHQNENDGGPGAREFVQSVRQSSQSALAHSVPWAELMSHLGLPFPSAQPQVFSCCVTFHDDRGTDPPLAINGVEGQYISAEGAKFPLLFEWQATRATGQHEQLTVRLEYDTDWFSAEFTEILEALLLECFRMLLEEEGSRHGEVKGRLGEVLQSEATRIGVAVDEIYETARQYLTVV.

Residues 13–407 are adenylation 1; the sequence is FSQQCFQHPD…GRRDRVTKIR (395 aa). Residues 525 to 601 form the Carrier 1 domain; the sequence is SGPLTIDQTI…ALVEKNRHET (77 aa). Ser-562 carries the O-(pantetheine 4'-phosphoryl)serine modification. The tract at residues 598–627 is disordered; that stretch reads RHETENRPDSSAFATRTPEESSMPTQGPVT. Residues 625 to 1018 form a condensation 1 region; sequence PVTPLQKRMV…YMSLLDAFLD (394 aa). The interval 1069-1447 is adenylation 2; it reads ASLHPTHIAV…GRKDRQVKVR (379 aa). The Carrier 2 domain occupies 1569-1647; it reads SSEAHLEKLI…DLITLVAQQQ (79 aa). Ser-1607 is subject to O-(pantetheine 4'-phosphoryl)serine. Positions 1688 to 2086 are condensation 2; sequence SQSQSTFNVP…EALLLECFRM (399 aa).

It belongs to the NRP synthetase family. Pantetheine 4'-phosphate serves as cofactor.

The enzyme catalyses L-tryptophan + L-alanine + 2 ATP = cyclo(L-tryptophyl-L-alanyl) + 2 ADP + 2 phosphate + 2 H(+). It functions in the pathway secondary metabolite biosynthesis. Its pathway is alkaloid biosynthesis. Functionally, nonribosomal peptide synthetase; part of the gene cluster that mediates the biosynthesis of echinulin family alkaloid. The pathway begins with the biosynthesis of the cyclic dipeptide cyclo-L-Trp-L-Ala (cyclo-TA) by the NRPS criC via condensation of L-alanine and L-tryptophan. The prenyltransferase criA then catalyzes the first prenylation step, a reverse prenylation reaction at C2, to yield preechinulin. Preechinulin is the substrate of the cytochrome P450 monooxygenase criE that catalyzes the formation of the double bond between C10 and C11 to produce neoechulin A. The unique prenyltransferase criF functions as a competitive enzyme with criE for preechinulin metabolization and uses preechinulin for effective regiospecific prenylations. Preechinulin is prenylated by criF at C5 or C7. C7-prenylation leads to accumulation of tardioxopiperazine B without further modification by criF. In contrast, the C5-prenylated tardioxopiperazine A can be prenylated again by criF, predominantly at C7 to form echinulin or less frequently at C4 to give variecolorin L. CriF also accepts neoechilunin A to produce varlecolorin G (prenylation at C5) or isoechinulin A (prenylation at C7). CriF further converts isoechinulin A into dehydroechinulin. Moreover, a yet unidentified enzyme can also convert neoechilunin A into neoechilunin B by introducing a double bond between positions C14 and C17 and thus provides a further substrate to criF for C5 and C7 prenylation. The polypeptide is Nonribosomal peptide synthetase criC (Aspergillus cristatus (Chinese Fuzhuan brick tea-fermentation fungus)).